The chain runs to 263 residues: MTPIKVVVHGASGKMGQEVLKTLCQENNFHPVGAVDIRAESPAMALPDGSGSIPYSADLSSILSQTKPDVMVDFTVAKASMPAIRIAAAHKVNLVIGTTGFSPEEISEIEQLAKTNDIGIILAPNFALGAIIMVHLAQVASRFLSSAEVIELHHDKKLDSPSGTALVTVASMLEARGEAFNKPPKENLTDARGQEHDGIRVHSVRLPGLLAHQEVIFGAAGQTLTIRHDAFSRECYMPGVLLAIKEIVHTKGFVFGLDKLLKL.

10-15 provides a ligand contact to NAD(+); the sequence is GASGKM. Arginine 38 is an NADP(+) binding site. NAD(+) is bound by residues 97-99 and 123-126; these read GTT and APNF. The active-site Proton donor/acceptor is histidine 153. Residue histidine 154 coordinates (S)-2,3,4,5-tetrahydrodipicolinate. The active-site Proton donor is the lysine 157. Residue 163–164 coordinates (S)-2,3,4,5-tetrahydrodipicolinate; sequence GT.

This sequence belongs to the DapB family.

The protein localises to the cytoplasm. The enzyme catalyses (S)-2,3,4,5-tetrahydrodipicolinate + NAD(+) + H2O = (2S,4S)-4-hydroxy-2,3,4,5-tetrahydrodipicolinate + NADH + H(+). It carries out the reaction (S)-2,3,4,5-tetrahydrodipicolinate + NADP(+) + H2O = (2S,4S)-4-hydroxy-2,3,4,5-tetrahydrodipicolinate + NADPH + H(+). It participates in amino-acid biosynthesis; L-lysine biosynthesis via DAP pathway; (S)-tetrahydrodipicolinate from L-aspartate: step 4/4. Catalyzes the conversion of 4-hydroxy-tetrahydrodipicolinate (HTPA) to tetrahydrodipicolinate. In Dehalococcoides mccartyi (strain CBDB1), this protein is 4-hydroxy-tetrahydrodipicolinate reductase.